Consider the following 381-residue polypeptide: MKFINDAIKESEKREKPSSSSMNSEIDRELREIIENSRAKIYVVGTGGAGNNTVTRLSEIGVEGAETIAVNTDAQDLFYSVANRKLLIGKNVCGGLGAGGVPEVGEECAEESEDDIRRELEGADMVFVTCGLGGGTGTGSAPVISKLAKKAGALTIAVATMPFSAEGLKRRENAERGLEKLQSAADTVIVIPNDKLLEVAPNLPLNKAFMVADEILGRAVKGITELITKPGLVSLDFADVRSIMKGSGMAMIGMGEAESGDRALESVYEALNSPLLDLDISNARGALINISGSSDLTLQEAERIVEVVAEELDPDANIIWGAQIQDELQNVIRTTIVVAGVRSPYIYGAHGSAEKEFLEEKQREKDSVDESVLEEFIDGVF.

The tract at residues Met1–Glu25 is disordered. The span at Ala7 to Pro17 shows a compositional bias: basic and acidic residues. Residues Gly48–Asn52, Gly135–Gly137, Glu166, Arg170, and Asp213 contribute to the GTP site.

The protein belongs to the FtsZ family. In terms of assembly, homodimer. Polymerizes to form a dynamic ring structure in a strictly GTP-dependent manner. Interacts directly with several other division proteins.

It localises to the cytoplasm. Essential cell division protein that forms a contractile ring structure (Z ring) at the future cell division site. The regulation of the ring assembly controls the timing and the location of cell division. One of the functions of the FtsZ ring is to recruit other cell division proteins to the septum to produce a new cell wall between the dividing cells. Binds GTP and shows GTPase activity. This Methanothermobacter thermautotrophicus (strain ATCC 29096 / DSM 1053 / JCM 10044 / NBRC 100330 / Delta H) (Methanobacterium thermoautotrophicum) protein is Cell division protein FtsZ.